Here is a 354-residue protein sequence, read N- to C-terminus: Methylthioribose-1-phosphate isomerase (354 aa).

Substrate-binding positions include 58-60, arginine 101, and glutamine 204; that span reads RGA. Residue aspartate 245 is the Proton donor of the active site. Residue 255-256 coordinates substrate; that stretch reads NK.

This sequence belongs to the eIF-2B alpha/beta/delta subunits family. MtnA subfamily.

The catalysed reaction is 5-(methylsulfanyl)-alpha-D-ribose 1-phosphate = 5-(methylsulfanyl)-D-ribulose 1-phosphate. Its pathway is amino-acid biosynthesis; L-methionine biosynthesis via salvage pathway; L-methionine from S-methyl-5-thio-alpha-D-ribose 1-phosphate: step 1/6. Functionally, catalyzes the interconversion of methylthioribose-1-phosphate (MTR-1-P) into methylthioribulose-1-phosphate (MTRu-1-P). This is Methylthioribose-1-phosphate isomerase from Xylella fastidiosa (strain 9a5c).